The sequence spans 499 residues: Glucose-6-phosphate exchanger SLC37A2 (499 aa).

Residues 21–40 form a helical membrane-spanning segment; it reads YRGFIIVMTFLFYTCYHLSR. 3 N-linked (GlcNAc...) asparagine glycosylation sites follow: Asn53, Asn62, and Asn66. Helical transmembrane passes span 86 to 106, 116 to 136, 143 to 163, 187 to 207, 208 to 228, 302 to 322, 334 to 354, 362 to 382, 391 to 411, 434 to 454, and 458 to 478; these read GSLD…SGIF, LSGG…GYYW, YYIL…PAVV, AVGN…AWGL, SFIV…FFLV, LCLL…PLYI, GDLS…AGGI, AITC…YNYF, IAML…ITTA, AIID…AGVL, and GWNY…LLLA.

This sequence belongs to the major facilitator superfamily. Organophosphate:Pi antiporter (OPA) (TC 2.A.1.4) family.

The protein resides in the endoplasmic reticulum membrane. It catalyses the reaction D-glucose 6-phosphate(in) + phosphate(out) = D-glucose 6-phosphate(out) + phosphate(in). In terms of biological role, inorganic phosphate and glucose-6-phosphate antiporter. May transport cytoplasmic glucose-6-phosphate into the lumen of the endoplasmic reticulum and translocate inorganic phosphate into the opposite direction. The sequence is that of Glucose-6-phosphate exchanger SLC37A2 from Xenopus laevis (African clawed frog).